Consider the following 657-residue polypeptide: MDKIIIKDLLIQAVIGVNPGERIIKQNIIISVTAYKDLSKCGSSDNVIDTVSYSSLSKSICSYSESSHHYTLEALATGVAKICCLGFGIERVKVLVQKPGAIKLAKWPGVQIERTLDYFKSNSFVEIPSKLINNNKNSNNSNAGNNIVYLAFGSNLGDKFQNILNSFKRLEKQCFIQSTSFMYESSPQYYREQDSFYNCACKVSTDLKPHDLLKFIKQIENDMGRVETFRNGPRVIDIDIIYYNGLIIKTDDLEIPHPLMWERDFVLLPLSDIAPNFIHPTLHITTNRMKLNLPNGGNIHNIPPPPTATTTCNNIIEKVIRIGNLNYNWNDKTFIMGILNVTPDSFVDGGKFNTLEKSIQQATALIEQGADIIDIGGQSTYPGAQQISIEEEINRVVPTIKKIREVLGNDIPLSIDTLHHQVAKEAILAGCNIINDVSGEFRVPIILNHSQPTTQYLQQKQNEQYLNNSNDSNSNSSINTNGEDNNNNNNNNNNNNNNNNNNNNNNNNNDDNDNDNRSKIKQKIDLSSPKIETCTKLGLFRWQIILDPGLGFYKTYEQSIEILQRGKELMGLGFPVLIGPSRKGFIANTIANAEKDKSLPPPSPKSERRLWGTIACCCIGSMWGANIIRIHDIPEIRDAMLISDSVNKPQRRYQIQK.

The DHNA stretch occupies residues 1–116 (MDKIIIKDLL…WPGVQIERTL (116 aa)). The segment at 149 to 274 (YLAFGSNLGD…FVLLPLSDIA (126 aa)) is HPPK. In terms of domain architecture, Pterin-binding spans 333–641 (TFIMGILNVT…DIPEIRDAML (309 aa)). The DHPS stretch occupies residues 335-657 (IMGILNVTPD…KPQRRYQIQK (323 aa)). N340 serves as a coordination point for Mg(2+). The (7,8-dihydropterin-6-yl)methyl diphosphate site is built by T380, D416, and N435. Residues 466-524 (LNNSNDSNSNSSINTNGEDNNNNNNNNNNNNNNNNNNNNNNNNNDDNDNDNRSKIKQKI) form a disordered region. Residues 467–509 (NNSNDSNSNSSINTNGEDNNNNNNNNNNNNNNNNNNNNNNNNN) show a composition bias toward low complexity. A compositionally biased stretch (basic and acidic residues) spans 514-524 (NDNRSKIKQKI). Residues D547, K583, and 629–631 (RIH) contribute to the (7,8-dihydropterin-6-yl)methyl diphosphate site.

The protein in the N-terminal section; belongs to the DHNA family. It in the central section; belongs to the HPPK family. This sequence in the C-terminal section; belongs to the DHPS family. It depends on Mg(2+) as a cofactor.

It carries out the reaction 7,8-dihydroneopterin = 6-hydroxymethyl-7,8-dihydropterin + glycolaldehyde. The catalysed reaction is 6-hydroxymethyl-7,8-dihydropterin + ATP = (7,8-dihydropterin-6-yl)methyl diphosphate + AMP + H(+). The enzyme catalyses (7,8-dihydropterin-6-yl)methyl diphosphate + 4-aminobenzoate = 7,8-dihydropteroate + diphosphate. It participates in cofactor biosynthesis; tetrahydrofolate biosynthesis; 2-amino-4-hydroxy-6-hydroxymethyl-7,8-dihydropteridine diphosphate from 7,8-dihydroneopterin triphosphate: step 3/4. The protein operates within cofactor biosynthesis; tetrahydrofolate biosynthesis; 2-amino-4-hydroxy-6-hydroxymethyl-7,8-dihydropteridine diphosphate from 7,8-dihydroneopterin triphosphate: step 4/4. Its pathway is cofactor biosynthesis; tetrahydrofolate biosynthesis; 7,8-dihydrofolate from 2-amino-4-hydroxy-6-hydroxymethyl-7,8-dihydropteridine diphosphate and 4-aminobenzoate: step 1/2. In terms of biological role, catalyzes three sequential steps of tetrahydrofolate biosynthesis. This Dictyostelium discoideum (Social amoeba) protein is Folic acid synthesis protein FOL1 (fol1).